The sequence spans 543 residues: Carboxypeptidase Y homolog A (543 aa).

An N-terminal signal peptide occupies residues 1–17 (MKVATSALLVGAVSASV). Positions 18 to 128 (GPQQQVLKFP…KLENYSMRTK (111 aa)) are excised as a propeptide. N-linked (GlcNAc...) asparagine glycans are attached at residues Asn122 and Asn213. 5 disulfides stabilise this stretch: Cys182-Cys421, Cys316-Cys330, Cys340-Cys363, Cys347-Cys356, and Cys385-Cys391. The active site involves Ser269. Asp460 is an active-site residue. Asn508 carries an N-linked (GlcNAc...) asparagine glycan. Residue His519 is part of the active site.

Belongs to the peptidase S10 family.

It is found in the vacuole. It catalyses the reaction Release of a C-terminal amino acid with broad specificity.. In terms of biological role, vacuolar carboxypeptidase involved in degradation of small peptides. Digests preferentially peptides containing an aliphatic or hydrophobic residue in P1' position, as well as methionine, leucine or phenylalanine in P1 position of ester substrate. The polypeptide is Carboxypeptidase Y homolog A (CPYA) (Leptosphaeria maculans (strain JN3 / isolate v23.1.3 / race Av1-4-5-6-7-8) (Blackleg fungus)).